The primary structure comprises 210 residues: Large ribosomal subunit protein uL3 (210 aa).

The segment at 123–144 (KRHGQSRGPMAHGSRYHRRPGS) is disordered.

The protein belongs to the universal ribosomal protein uL3 family. As to quaternary structure, part of the 50S ribosomal subunit. Forms a cluster with proteins L14 and L19.

Its function is as follows. One of the primary rRNA binding proteins, it binds directly near the 3'-end of the 23S rRNA, where it nucleates assembly of the 50S subunit. This is Large ribosomal subunit protein uL3 from Alkaliphilus metalliredigens (strain QYMF).